Consider the following 856-residue polypeptide: 3-hydroxy-3-methylglutaryl-coenzyme A reductase (856 aa).

The next 4 membrane-spanning stretches (helical) occupy residues 12–32 (FCAS…VCML), 89–109 (ILGI…SSVI), 123–143 (LFFF…QFAL), and 190–210 (VLCC…MTFY). Asn-326 is a glycosylation site (N-linked (GlcNAc...) asparagine). The helical transmembrane segment at 344–364 (SADHIVILILLLALAVKFVFF) threads the bilayer. The interval 365–443 (ETRDELTTTR…CEVMALVTSG (79 aa)) is linker. An N-linked (GlcNAc...) asparagine glycan is attached at Asn-412. The catalytic stretch occupies residues 443 to 771 (GHIAGYQLEK…SCTMPSIEIG (329 aa)). Catalysis depends on charge relay system residues Glu-528 and Lys-659. N-linked (GlcNAc...) asparagine glycosylation is present at Asn-700. Asp-735 functions as the Charge relay system in the catalytic mechanism. The Proton donor role is filled by His-834. Positions 836–856 (RHNRSSVSTSGSEPSTPACKS) are disordered. A glycan (N-linked (GlcNAc...) asparagine) is linked at Asn-838. Over residues 840–856 (SSVSTSGSEPSTPACKS) the composition is skewed to low complexity.

Belongs to the HMG-CoA reductase family.

It is found in the endoplasmic reticulum membrane. The enzyme catalyses (R)-mevalonate + 2 NADP(+) + CoA = (3S)-3-hydroxy-3-methylglutaryl-CoA + 2 NADPH + 2 H(+). It functions in the pathway metabolic intermediate biosynthesis; (R)-mevalonate biosynthesis; (R)-mevalonate from acetyl-CoA: step 3/3. The activity of HMG-CoA-reductase is suppressed by exogenous mevalonate. Its function is as follows. Synthesis of mevalonate for the production of non-sterol isoprenoids, which are essential for growth differentiation. The protein is 3-hydroxy-3-methylglutaryl-coenzyme A reductase of Blattella germanica (German cockroach).